Here is a 913-residue protein sequence, read N- to C-terminus: Protein SEY1 homolog (913 aa).

Topologically, residues 1-825 are cytoplasmic; it reads MTDVNKTQII…ETGGHMSLKN (825 aa). A GB1/RHD3-type G domain is found at 33–288; the sequence is GFNYNVIAIL…IPADGFAQYC (256 aa). 43 to 50 provides a ligand contact to GTP; the sequence is GSQSSGKS. Residues 826–846 traverse the membrane as a helical segment; it reads VPFAFWVILLILGWNEILMFT. Topologically, residues 847 to 849 are lumenal; sequence RLF. A helical membrane pass occupies residues 850–870; sequence FRLNIILPMLIGFIIIVISCL. Over 871–913 the chain is Cytoplasmic; that stretch reads YTGNAQILSYINKIIFIVIKNLYNFYKHLQTIGHQTTKPEKVE.

The protein belongs to the TRAFAC class dynamin-like GTPase superfamily. GB1/RHD3 GTPase family. RHD3 subfamily.

It is found in the endoplasmic reticulum membrane. In terms of biological role, probable GTP-binding protein involved in generating and maintaining the structure of the tubular endoplasmic reticulum network. This Plasmodium berghei (strain Anka) protein is Protein SEY1 homolog.